The sequence spans 433 residues: Chaperone SurA (433 aa).

The signal sequence occupies residues 1–28 (MTAITRITLTGALLAAALLLAALQPARA). PpiC domains lie at 174 to 277 (NQEY…KLMD) and 286 to 386 (VTET…QVTD).

It localises to the periplasm. The enzyme catalyses [protein]-peptidylproline (omega=180) = [protein]-peptidylproline (omega=0). Chaperone involved in the correct folding and assembly of outer membrane proteins. Recognizes specific patterns of aromatic residues and the orientation of their side chains, which are found more frequently in integral outer membrane proteins. May act in both early periplasmic and late outer membrane-associated steps of protein maturation. In Alkalilimnicola ehrlichii (strain ATCC BAA-1101 / DSM 17681 / MLHE-1), this protein is Chaperone SurA.